We begin with the raw amino-acid sequence, 368 residues long: Transcription factor TGA7 (368 aa).

The segment covering 70 to 82 (HNQIEAEQPSSND) has biased composition (polar residues). A disordered region spans residues 70 to 89 (HNQIEAEQPSSNDNQDDDGR). In terms of domain architecture, bZIP spans 91–151 (HDKMKRRLAQ…LGPSGSINTG (61 aa)). Coiled-coil stretches lie at residues 92–142 (DKMK…QGHL) and 252–285 (DQQI…SLAE). The basic motif stretch occupies residues 93-113 (KMKRRLAQNREAARKSRLRKK). The leucine-zipper stretch occupies residues 119–133 (LEESRLKLSQLEQEL). Residues 152-363 (IASFEMEYSH…RALSSLWAAR (212 aa)) enclose the DOG1 domain.

Belongs to the bZIP family. As to quaternary structure, binds DNA as a dimer. Interacts with NPR1 and NPR4. Interacts with GRXC7/ROXY1.

The protein resides in the nucleus. Transcriptional activator that binds specifically to the DNA sequence 5'-TGACG-3'. Recognizes ocs elements like the as-1 motif of the cauliflower mosaic virus 35S promoter. Binding to the as-1-like cis elements mediate auxin- and salicylic acid-inducible transcription. May be involved in the induction of the systemic acquired resistance (SAR) via its interaction with NPR1. In Arabidopsis thaliana (Mouse-ear cress), this protein is Transcription factor TGA7 (TGA7).